Here is a 121-residue protein sequence, read N- to C-terminus: Large ribosomal subunit protein bL20 (121 aa).

This sequence belongs to the bacterial ribosomal protein bL20 family.

Functionally, binds directly to 23S ribosomal RNA and is necessary for the in vitro assembly process of the 50S ribosomal subunit. It is not involved in the protein synthesizing functions of that subunit. In Methylorubrum extorquens (strain PA1) (Methylobacterium extorquens), this protein is Large ribosomal subunit protein bL20.